We begin with the raw amino-acid sequence, 307 residues long: MAALLLGAVLLVAQPQLVPSRPAELGQQELLRKAGTLQDDVRDGVAPNGSAQQLPQTIIIGVRKGGTRALLEMLSLHPDVAAAENEVHFFDWEEHYSHGLGWYLSQMPFSWPHQLTVEKTPAYFTSPKVPERVYSMNPSIRLLLILRDPSERVLSDYTQVFYNHMQKHKPYPSIEEFLVRDGRLNVDYKALNRSLYHVHMQNWLRFFPLRHIHIVDGDRLIRDPFPEIQKVERFLKLSPQINASNFYFNKTKGFYCLRDSGRDRCLHESKGRAHPQVDPKLLNKLHEYFHEPNKKFFELVGRTFDWH.

The signal sequence occupies residues Met-1–Ser-20. Asn-48 is a glycosylation site (N-linked (GlcNAc...) asparagine). Residues Lys-64–Arg-68, Arg-147, and Ser-155 contribute to the 3'-phosphoadenylyl sulfate site. N-linked (GlcNAc...) asparagine glycosylation is found at Asn-192, Asn-242, and Asn-249. 3'-phosphoadenylyl sulfate is bound at residue Tyr-255. Cys-256 and Cys-265 are oxidised to a cystine. Lys-270–His-274 is a binding site for 3'-phosphoadenylyl sulfate.

It belongs to the sulfotransferase 1 family. As to expression, highly expressed in the brain and kidney and weakly expressed in the heart, lung and placenta.

It is found in the golgi apparatus lumen. It carries out the reaction alpha-D-glucosaminyl-[heparan sulfate](n) + 3'-phosphoadenylyl sulfate = 3-sulfo-alpha-D-glucosaminyl-[heparan sulfate](n) + adenosine 3',5'-bisphosphate + H(+). In terms of biological role, sulfotransferase that utilizes 3'-phospho-5'-adenylyl sulfate (PAPS) to catalyze the transfer of a sulfo group to position 3 of glucosamine residues in heparan. Catalyzes the rate limiting step in the biosynthesis of heparan sulfate (HSact). This modification is a crucial step in the biosynthesis of anticoagulant heparan sulfate as it completes the structure of the antithrombin pentasaccharide binding site. This Homo sapiens (Human) protein is Heparan sulfate glucosamine 3-O-sulfotransferase 1 (HS3ST1).